Consider the following 297-residue polypeptide: Phosphoribosylaminoimidazole-succinocarboxamide synthase (297 aa).

It belongs to the SAICAR synthetase family.

It catalyses the reaction 5-amino-1-(5-phospho-D-ribosyl)imidazole-4-carboxylate + L-aspartate + ATP = (2S)-2-[5-amino-1-(5-phospho-beta-D-ribosyl)imidazole-4-carboxamido]succinate + ADP + phosphate + 2 H(+). Its pathway is purine metabolism; IMP biosynthesis via de novo pathway; 5-amino-1-(5-phospho-D-ribosyl)imidazole-4-carboxamide from 5-amino-1-(5-phospho-D-ribosyl)imidazole-4-carboxylate: step 1/2. The protein is Phosphoribosylaminoimidazole-succinocarboxamide synthase of Methylococcus capsulatus (strain ATCC 33009 / NCIMB 11132 / Bath).